Consider the following 166-residue polypeptide: Monothiol glutaredoxin-3 (166 aa).

Residues 56-159 (DSTDFEVFLE…STLDEWTHNK (104 aa)) form the Glutaredoxin domain. Cysteine 76 serves as a coordination point for [2Fe-2S] cluster.

Belongs to the glutaredoxin family. Monothiol subfamily. In terms of assembly, homodimer.

Its subcellular location is the nucleus. Its function is as follows. Monothiol glutaredoxin involved in the biogenesis of iron-sulfur clusters. Binds one iron-sulfur cluster per dimer. The iron-sulfur cluster is bound between subunits, and is complexed by a bound glutathione and a cysteine residue from each subunit. The chain is Monothiol glutaredoxin-3 (grx3) from Schizosaccharomyces pombe (strain 972 / ATCC 24843) (Fission yeast).